The chain runs to 245 residues: 7-cyano-7-deazaguanine synthase 2 (245 aa).

An ATP-binding site is contributed by 12–22 (FSGGQDSTTCL). Zn(2+) contacts are provided by C200, C215, C218, and C221.

Belongs to the QueC family. Zn(2+) serves as cofactor.

The catalysed reaction is 7-carboxy-7-deazaguanine + NH4(+) + ATP = 7-cyano-7-deazaguanine + ADP + phosphate + H2O + H(+). The protein operates within purine metabolism; 7-cyano-7-deazaguanine biosynthesis. Catalyzes the ATP-dependent conversion of 7-carboxy-7-deazaguanine (CDG) to 7-cyano-7-deazaguanine (preQ(0)). This chain is 7-cyano-7-deazaguanine synthase 2, found in Mesorhizobium japonicum (strain LMG 29417 / CECT 9101 / MAFF 303099) (Mesorhizobium loti (strain MAFF 303099)).